We begin with the raw amino-acid sequence, 651 residues long: MBT domain-containing protein 1 (651 aa).

The tract at residues 21-55 is disordered; it reads SFGMFDGYDSCSEDTSSSSSSDESEEEVAPLPSSL. The segment covering 29–41 has biased composition (low complexity); the sequence is DSCSEDTSSSSSS. The segment at 68-103 adopts an FCS-type zinc-finger fold; the sequence is PDGKSGMATCEMCGMVGVRDAFYSKTKRFCSVSCSR. Zn(2+)-binding residues include cysteine 77, cysteine 80, cysteine 97, and cysteine 101. 4 MBT repeats span residues 164-268, 276-373, 374-479, and 487-583; these read FSWG…LVPP, TNWK…IGHR, FKRT…LTPP, and FKWF…LQPP. 2 disordered regions span residues 581-610 and 629-651; these read QPPAPQSNKDSQSNISKQKKKSKSQPYKGH and TFLQGASDQESNGSGSYYIKQEP. Low complexity predominate over residues 586-596; the sequence is QSNKDSQSNIS. Positions 597 to 610 are enriched in basic residues; the sequence is KQKKKSKSQPYKGH. The segment covering 632–643 has biased composition (polar residues); sequence QGASDQESNGSG.

As to quaternary structure, monomer. Component of the NuA4 histone acetyltransferase complex.

Its subcellular location is the nucleus. It is found in the chromosome. Its function is as follows. Chromatin reader component of the NuA4 histone acetyltransferase complex, a multiprotein complex involved in transcriptional activation of select genes principally by acetylation of nucleosomal histones H4 and H2A. The NuA4 complex plays a direct role in repair of DNA double-strand breaks (DSBs) by promoting homologous recombination (HR). MBTD1 specifically recognizes and binds monomethylated and dimethylated 'Lys-20' on histone H4 (H4K20me1 and H4K20me2, respectively). In the NuA4 complex, MBTD1 promotes recruitment of the complex to H4K20me marks by competing with TP53BP1 for binding to H4K20me. Following recruitment to H4K20me at DNA breaks, the NuA4 complex catalyzes acetylation of 'Lys-15' on histone H2A (H2AK15), blocking the ubiquitination mark required for TP53BP1 localization at DNA breaks, thereby promoting homologous recombination (HR). The protein is MBT domain-containing protein 1 of Xenopus tropicalis (Western clawed frog).